Reading from the N-terminus, the 272-residue chain is Dermonecrotic toxin SpeSicTox-betaIB1b (272 aa).

The active site involves histidine 5. Mg(2+)-binding residues include glutamate 25 and aspartate 27. Residue histidine 41 is the Nucleophile of the active site. 2 disulfide bridges follow: cysteine 45-cysteine 51 and cysteine 47-cysteine 191. Aspartate 85 is a Mg(2+) binding site.

Belongs to the arthropod phospholipase D family. Class II subfamily. Requires Mg(2+) as cofactor. Expressed by the venom gland.

Its subcellular location is the secreted. It catalyses the reaction an N-(acyl)-sphingosylphosphocholine = an N-(acyl)-sphingosyl-1,3-cyclic phosphate + choline. The catalysed reaction is an N-(acyl)-sphingosylphosphoethanolamine = an N-(acyl)-sphingosyl-1,3-cyclic phosphate + ethanolamine. It carries out the reaction a 1-acyl-sn-glycero-3-phosphocholine = a 1-acyl-sn-glycero-2,3-cyclic phosphate + choline. The enzyme catalyses a 1-acyl-sn-glycero-3-phosphoethanolamine = a 1-acyl-sn-glycero-2,3-cyclic phosphate + ethanolamine. In terms of biological role, dermonecrotic toxins cleave the phosphodiester linkage between the phosphate and headgroup of certain phospholipids (sphingolipid and lysolipid substrates), forming an alcohol (often choline) and a cyclic phosphate. This toxin acts on sphingomyelin (SM). It may also act on ceramide phosphoethanolamine (CPE), lysophosphatidylcholine (LPC) and lysophosphatidylethanolamine (LPE), but not on lysophosphatidylserine (LPS), and lysophosphatidylglycerol (LPG). It acts by transphosphatidylation, releasing exclusively cyclic phosphate products as second products. Induces dermonecrosis, hemolysis, increased vascular permeability, edema, inflammatory response, and platelet aggregation. This chain is Dermonecrotic toxin SpeSicTox-betaIB1b, found in Sicarius peruensis (Six-eyed sand spider).